The sequence spans 364 residues: Chorismate synthase (364 aa).

Residues Arg48 and Arg54 each contribute to the NADP(+) site. Residues 125–127 (RSS), Gly282, 297–301 (KPPAS), and Arg323 each bind FMN.

This sequence belongs to the chorismate synthase family. Homotetramer. The cofactor is FMNH2.

It catalyses the reaction 5-O-(1-carboxyvinyl)-3-phosphoshikimate = chorismate + phosphate. The protein operates within metabolic intermediate biosynthesis; chorismate biosynthesis; chorismate from D-erythrose 4-phosphate and phosphoenolpyruvate: step 7/7. Functionally, catalyzes the anti-1,4-elimination of the C-3 phosphate and the C-6 proR hydrogen from 5-enolpyruvylshikimate-3-phosphate (EPSP) to yield chorismate, which is the branch point compound that serves as the starting substrate for the three terminal pathways of aromatic amino acid biosynthesis. This reaction introduces a second double bond into the aromatic ring system. This chain is Chorismate synthase, found in Chloroflexus aurantiacus (strain ATCC 29366 / DSM 635 / J-10-fl).